The following is a 256-amino-acid chain: Acetyl-coenzyme A carboxylase carboxyl transferase subunit alpha (256 aa).

A CoA carboxyltransferase C-terminal domain is found at Met1 to Gln236.

Belongs to the AccA family. In terms of assembly, acetyl-CoA carboxylase is a heterohexamer composed of biotin carboxyl carrier protein (AccB), biotin carboxylase (AccC) and two subunits each of ACCase subunit alpha (AccA) and ACCase subunit beta (AccD).

It localises to the cytoplasm. It catalyses the reaction N(6)-carboxybiotinyl-L-lysyl-[protein] + acetyl-CoA = N(6)-biotinyl-L-lysyl-[protein] + malonyl-CoA. Its pathway is lipid metabolism; malonyl-CoA biosynthesis; malonyl-CoA from acetyl-CoA: step 1/1. Component of the acetyl coenzyme A carboxylase (ACC) complex. First, biotin carboxylase catalyzes the carboxylation of biotin on its carrier protein (BCCP) and then the CO(2) group is transferred by the carboxyltransferase to acetyl-CoA to form malonyl-CoA. This chain is Acetyl-coenzyme A carboxylase carboxyl transferase subunit alpha, found in Streptococcus equi subsp. zooepidemicus (strain H70).